Reading from the N-terminus, the 122-residue chain is Cadmium resistance transcriptional regulatory protein CadC (122 aa).

The Cd(2+) site is built by C7, C11, C58, and C60. Residues 24–119 (LQTVDISGVS…IALAHKKEVK (96 aa)) enclose the HTH arsR-type domain. The H-T-H motif DNA-binding region spans 59–78 (VCDIANILGVTIANASHHLR). The Zn(2+) site is built by D101, H103, H114, and E117.

As to quaternary structure, homodimer.

In terms of biological role, metal-binding repressor for the cad operon. Involved in resistance to heavy metals, such as cadmium, bismuth, zinc or lead. Binds 2 metal ions per subunit. Metal binding to the N-terminal regulatory site causes the repressor to dissociate from the DNA. The polypeptide is Cadmium resistance transcriptional regulatory protein CadC (cadC) (Staphylococcus aureus).